The sequence spans 281 residues: NH(3)-dependent NAD(+) synthetase (281 aa).

ATP is bound at residue 24–31 (GVSGGVDS). D30 contacts Mg(2+). R145 is a deamido-NAD(+) binding site. T165 is an ATP binding site. Residue E170 coordinates Mg(2+). Deamido-NAD(+) is bound by residues K178 and D185. 2 residues coordinate ATP: K194 and S216.

It belongs to the NAD synthetase family. In terms of assembly, homodimer.

The enzyme catalyses deamido-NAD(+) + NH4(+) + ATP = AMP + diphosphate + NAD(+) + H(+). Its pathway is cofactor biosynthesis; NAD(+) biosynthesis; NAD(+) from deamido-NAD(+) (ammonia route): step 1/1. Functionally, catalyzes the ATP-dependent amidation of deamido-NAD to form NAD. Uses ammonia as a nitrogen source. This chain is NH(3)-dependent NAD(+) synthetase (nadE1), found in Thermotoga maritima (strain ATCC 43589 / DSM 3109 / JCM 10099 / NBRC 100826 / MSB8).